The sequence spans 32 residues: Yop proteins translocation protein A (32 aa).

This chain is Yop proteins translocation protein A (yscA), found in Yersinia pestis.